The following is a 315-amino-acid chain: Ribosomal protein L11 methyltransferase (315 aa).

T164, G185, D207, and N250 together coordinate S-adenosyl-L-methionine.

This sequence belongs to the methyltransferase superfamily. PrmA family.

The protein resides in the cytoplasm. It catalyses the reaction L-lysyl-[protein] + 3 S-adenosyl-L-methionine = N(6),N(6),N(6)-trimethyl-L-lysyl-[protein] + 3 S-adenosyl-L-homocysteine + 3 H(+). In terms of biological role, methylates ribosomal protein L11. The polypeptide is Ribosomal protein L11 methyltransferase (Exiguobacterium sibiricum (strain DSM 17290 / CCUG 55495 / CIP 109462 / JCM 13490 / 255-15)).